The following is a 331-amino-acid chain: Isopenicillin N synthase (331 aa).

Positions 87, 91, 183, and 189 each coordinate isopenicillin N. Positions 87, 91, 183, 189, 214, and 216 each coordinate N-[(5S)-5-amino-5-carboxypentanoyl]-L-cysteinyl-D-valine. The 113-residue stretch at 176 to 288 folds into the Fe2OG dioxygenase domain; it reads KPDDTLASVV…RQSLPFFVNL (113 aa). Residues H214, D216, and H270 each coordinate Fe(2+). R279 contributes to the 2-oxoglutarate binding site. S281 serves as a coordination point for isopenicillin N. S281 provides a ligand contact to N-[(5S)-5-amino-5-carboxypentanoyl]-L-cysteinyl-D-valine.

Belongs to the iron/ascorbate-dependent oxidoreductase family. As to quaternary structure, monomer. The cofactor is Fe(2+).

It is found in the cytoplasm. The protein resides in the cytosol. It catalyses the reaction N-[(5S)-5-amino-5-carboxypentanoyl]-L-cysteinyl-D-valine + O2 = isopenicillin N + 2 H2O. It participates in antibiotic biosynthesis; penicillin G biosynthesis; penicillin G from L-alpha-aminoadipate and L-cysteine and L-valine: step 2/3. Functionally, isopenicillin N synthase; part of the gene cluster that mediates the biosynthesis of penicillin, the world's most important antibiotic. IpnA catalyzes the cyclization of the tripeptide N-[(5S)-5-amino-5-carboxypentanoyl]-L-cysteinyl-D-valine (LLD-ACV or ACV) to form isopenicillin N (IPN) that contains the beta-lactam nucleus. The penicillin biosynthesis occurs via 3 enzymatic steps, the first corresponding to the production of the tripeptide N-[(5S)-5-amino-5-carboxypentanoyl]-L-cysteinyl-D-valine (LLD-ACV or ACV) by the NRPS acvA. The tripeptide ACV is then cyclized to isopenicillin N (IPN) by the isopenicillin N synthase ipnA that forms the beta-lactam nucleus. Finally, the alpha-aminoadipyl side chain is exchanged for phenylacetic acid by the isopenicillin N acyltransferase penDE to yield penicillin in the peroxisomal matrix. In Emericella nidulans (strain FGSC A4 / ATCC 38163 / CBS 112.46 / NRRL 194 / M139) (Aspergillus nidulans), this protein is Isopenicillin N synthase.